A 562-amino-acid chain; its full sequence is NAD-dependent malic enzyme (562 aa).

Tyr101 serves as the catalytic Proton donor. NAD(+) is bound at residue Arg154. Catalysis depends on Lys172, which acts as the Proton acceptor. A divalent metal cation contacts are provided by Glu243, Asp244, and Asp267. NAD(+) contacts are provided by Asp267 and Asn415.

It belongs to the malic enzymes family. Homotetramer. Mg(2+) serves as cofactor. Mn(2+) is required as a cofactor.

It catalyses the reaction (S)-malate + NAD(+) = pyruvate + CO2 + NADH. The enzyme catalyses oxaloacetate + H(+) = pyruvate + CO2. This is NAD-dependent malic enzyme from Shewanella piezotolerans (strain WP3 / JCM 13877).